Here is a 352-residue protein sequence, read N- to C-terminus: Histidinol-phosphate aminotransferase (352 aa).

Lys-221 is modified (N6-(pyridoxal phosphate)lysine).

Belongs to the class-II pyridoxal-phosphate-dependent aminotransferase family. Histidinol-phosphate aminotransferase subfamily. As to quaternary structure, homodimer. Pyridoxal 5'-phosphate serves as cofactor.

The enzyme catalyses L-histidinol phosphate + 2-oxoglutarate = 3-(imidazol-4-yl)-2-oxopropyl phosphate + L-glutamate. The protein operates within amino-acid biosynthesis; L-histidine biosynthesis; L-histidine from 5-phospho-alpha-D-ribose 1-diphosphate: step 7/9. In Staphylococcus aureus (strain bovine RF122 / ET3-1), this protein is Histidinol-phosphate aminotransferase.